The chain runs to 410 residues: ORC1-type DNA replication protein 4 (410 aa).

Residues 73-77, tyrosine 220, and arginine 232 contribute to the ATP site; that span reads TGKSL.

It belongs to the CDC6/cdc18 family.

Involved in regulation of DNA replication. The polypeptide is ORC1-type DNA replication protein 4 (orc4) (Halobacterium salinarum (strain ATCC 700922 / JCM 11081 / NRC-1) (Halobacterium halobium)).